The chain runs to 238 residues: Probable amino-acid ABC transporter permease protein y4tF (238 aa).

The ABC transmembrane type-1 domain occupies 29–223 (AWVTIQFTLY…GIALVLSFFM (195 aa)). The next 5 helical transmembrane spans lie at 33 to 53 (IQFT…FGIG), 77 to 97 (LLVQ…MMGI), 103 to 123 (PVVA…AEIV), 152 to 172 (VALP…AIAA), and 203 to 223 (TVYT…SFFM).

The protein belongs to the binding-protein-dependent transport system permease family. HisMQ subfamily.

Its subcellular location is the cell inner membrane. Probably part of the binding-protein-dependent transport system y4tEFGH for an amino acid. Probably responsible for the translocation of the substrate across the membrane. This chain is Probable amino-acid ABC transporter permease protein y4tF, found in Sinorhizobium fredii (strain NBRC 101917 / NGR234).